The chain runs to 134 residues: Large ribosomal subunit protein bL20 (134 aa).

The protein belongs to the bacterial ribosomal protein bL20 family.

Binds directly to 23S ribosomal RNA and is necessary for the in vitro assembly process of the 50S ribosomal subunit. It is not involved in the protein synthesizing functions of that subunit. This Brucella abortus (strain S19) protein is Large ribosomal subunit protein bL20.